A 4036-amino-acid chain; its full sequence is Hybrid PKS-NRPS synthetase iliA (4036 aa).

Positions 7-439 (PEPIAVIGSA…GTNAHAIIES (433 aa)) constitute a Ketosynthase family 3 (KS3) domain. Residues C181, H318, and H359 each act as for beta-ketoacyl synthase activity in the active site. The interval 561–886 (IFTGQGAQWP…LKRNGSDVEA (326 aa)) is malonyl-CoA:ACP transacylase (MAT) domain. The N-terminal hotdog fold stretch occupies residues 955 to 1092 (HELLGRRTPD…GDLVVHLGAD (138 aa)). Residues 955–1262 (HELLGRRTPD…ATNMVGEQDA (308 aa)) are dehydratase (DH) domain. Residues 955–1263 (HELLGRRTPD…TNMVGEQDAS (309 aa)) form the PKS/mFAS DH domain. H987 serves as the catalytic Proton acceptor; for dehydratase activity. Residues 1109–1263 (LVNIDGERVY…TNMVGEQDAS (155 aa)) form a C-terminal hotdog fold region. D1168 serves as the catalytic Proton donor; for dehydratase activity. A methyltransferase (MT) domain region spans residues 1402 to 1601 (EDDMLDRFYM…FSGADTVMHD (200 aa)). The ketoreductase (KR) domain stretch occupies residues 2136–2277 (KTYFMVGMAG…SVATVIGNIG (142 aa)). The Carrier 1 domain maps to 2425-2502 (EAVAAVVKAF…QVCTWATKKV (78 aa)). An O-(pantetheine 4'-phosphoryl)serine modification is found at S2462. 2 disordered regions span residues 2520–2583 (AEKT…KLGT) and 2597–2621 (DADARSESTGSSGMADSDDSSNRPE). The span at 2530–2540 (APAPDAAPAPA) shows a compositional bias: pro residues. Residues 2627-3054 (IMSQAQSRIW…HLDITECEIY (428 aa)) are condensation (C) domain. Positions 3088–3485 (SLHSDKSAVK…GTLLCLGRLD (398 aa)) are adenylation (A) (KR) domain. The reductase (RED) domain stretch occupies residues 3088 to 3485 (SLHSDKSAVK…GTLLCLGRLD (398 aa)). A Carrier 2 domain is found at 3596–3675 (EKMTIREGEV…EMARRIDEHQ (80 aa)). The residue at position 3635 (S3635) is an O-(pantetheine 4'-phosphoryl)serine.

This sequence in the C-terminal section; belongs to the NRP synthetase family.

It carries out the reaction L-tyrosine + holo-[ACP] + 7 malonyl-CoA + acetyl-CoA + 8 AH2 + 2 S-adenosyl-L-methionine + ATP + 4 H(+) = N-[(4E,6E,10S,12Z,14E)-6,10-dimethyl-3-oxohexadeca-4,6,12,14-tetraenoyl]-L-tyrosyl-[ACP] + 8 A + AMP + 2 S-adenosyl-L-homocysteine + 7 CO2 + diphosphate + 8 CoA + 6 H2O. The protein operates within mycotoxin biosynthesis. Hybrid PKS-NRPS synthetase; part of the gene cluster that mediates the biosynthesis of ilicicolin H, a 4-hydroxy-2-pyridonealkaloid that has potent and broad antifungal activities by inhibiting the mitochondrial respiration chain. IliA assembles the backbone of ilicicolin H. The PKS portion and trans-acting enoyl reductase iliB work together to construct an octaketide, and two methyl groups are introduced by the MT domain during the chain assembly. The nascent chain is then condensed with tyrosine, catalyzed by the C domain, and the resulting PKS-NRPS hybrid is offloaded by the RED domain to form an advanced tetramic acid intermediate. The biosynthesis of ilicicolin H starts with formation of the tetramic acid by the hybrid PKS-NRPS synthetase iliA with the partnering trans-enoyl reductase iliB since iliA lacks a designated enoylreductase (ER) domain. The cytochrome P450 monooxygenase iliC then catalyzes the ring expansion of the tetramate to the acyclic 2-pyridone. The pericyclase iliD further converts the acyclic 2-pyridone into 8-epi-ilicicolin H. 8-epi-ilicicolin H might then spontaneously convert to ilicicolin H, since ilicicolin H is produced in the absence of the epimerase iliE, in contrast to what was observed for the Talaromyces variabilis ilicolin H biosynthetic pathway. The sequence is that of Hybrid PKS-NRPS synthetase iliA from Neonectria sp. (strain DH2).